The primary structure comprises 354 residues: Molybdenum import ATP-binding protein ModC (354 aa).

Positions 1-229 (MLELDFEQQL…SALRLWLQKE (229 aa)) constitute an ABC transporter domain. ATP is bound at residue 31 to 38 (GLSGAGKT). Residues 289-354 (GSSIRNILAV…IKSVSFHRQL (66 aa)) form the Mop domain.

Belongs to the ABC transporter superfamily. Molybdate importer (TC 3.A.1.8) family. The complex is composed of two ATP-binding proteins (ModC), two transmembrane proteins (ModB) and a solute-binding protein (ModA).

The protein localises to the cell inner membrane. The catalysed reaction is molybdate(out) + ATP + H2O = molybdate(in) + ADP + phosphate + H(+). Part of the ABC transporter complex ModABC involved in molybdenum import. Responsible for energy coupling to the transport system. The polypeptide is Molybdenum import ATP-binding protein ModC (Photorhabdus laumondii subsp. laumondii (strain DSM 15139 / CIP 105565 / TT01) (Photorhabdus luminescens subsp. laumondii)).